The following is a 153-amino-acid chain: Calmodulin-like protein 4 (153 aa).

EF-hand domains lie at 8–43 (DAIQ…LGTC), 44–79 (PTPG…QQKQ), 81–116 (DPEN…MGEK), and 117–152 (LTPE…PVPD).

It belongs to the calmodulin family. Associates with the IMAC/intermicrovillar adhesion complex.

The protein resides in the cell projection. Its subcellular location is the microvillus. Functionally, as part of the intermicrovillar adhesion complex/IMAC plays a role in epithelial brush border differentiation, controlling microvilli organization and length. Acts as a light chain for MYO7B and is required for efficient targeting of the IMAC to the tips of border brush microvilli. The chain is Calmodulin-like protein 4 (calml4) from Xenopus tropicalis (Western clawed frog).